The primary structure comprises 545 residues: MLPRLGFARTARSIHRFKMTQISKPFFHSTEVGKPGPQQKLSKSYTAVFKKWFVRGLKLTFYTTLAGTLYVSYELYKESNPPKQVPQSTAFANGLKKKELVILGTGWGAISLLKKLDTSLYNVTVVSPRSFFLFTPLLPSTPVGTIEMKSIVEPVRSIARRTPGEVHYIEAEALDVDPKAKKVMVQSVSEDEYFVSSLSYDYLVVSVGAKTTTFNIPGVYGNANFLKEIEDAQNIRMKLMKTIEQASSFPVNDPERKRLLTFVVVGGGPTGVEFAAELQDYINQDLRKWMPDLSKEMKVILIEALPNILNMFDKTLIKYAEDLFARDEIDLQVNTAVKVVEPTYIRTLQNGQTNTDIEYGMLVWATGNEPIDFSKTLMSRIPEQTNRRGLLINDKLELLGSENSIYAIGDCTAHTGFFPTAQVAHQEGEYLAKILDKKLQIEQLEWDMLNSTDETEVSRLQKEVNLRKSKLDKFNYKHMGALAYIGSETAIADLHMGDSSYQLKGMFAFLFWKSAYLAMCLSIRNRILIAMDWTKVYFLGRDSSV.

The transit peptide at Met1–Gln21 directs the protein to the mitochondrion. An FAD-binding site is contributed by Glu99–Arg129. Leu260–Glu296 contacts NAD(+).

Belongs to the NADH dehydrogenase family.

It is found in the mitochondrion intermembrane space. The enzyme catalyses a quinone + NADH + H(+) = a quinol + NAD(+). The catalysed reaction is a ubiquinone + NADH + H(+) = a ubiquinol + NAD(+). External NADH dehydrogenase required for optimum cellular growth with a number of nonfermentable carbon sources, including ethanol. With NDE1, performes the mitochondrial oxidation of cytosolic NADH under these growth conditions. Regulates the mitochondrial glycerol-3-phosphate dehydrogenase, GUT2, also involved in cytosolic NADH oxidation. This is External NADH-ubiquinone oxidoreductase 2, mitochondrial (NDE2) from Saccharomyces cerevisiae (strain ATCC 204508 / S288c) (Baker's yeast).